The sequence spans 118 residues: uncharacterized protein (118 aa).

This is an uncharacterized protein from Clostridium perfringens.